The following is a 209-amino-acid chain: HTLV-1 basic zipper factor (209 aa).

A disordered region spans residues 48–162 (DGLLSLEEES…SARKEKMQEL (115 aa)). 2 stretches are compositionally biased toward basic and acidic residues: residues 70-87 (APPRGETHRDRQRRAEEK) and 94-114 (REKEEEKQTAEYLKRKEEEKA). A Nuclear localization signal 1 motif is present at residues 87–92 (KRKRKK). 2 consecutive short sequence motifs (nuclear localization signal) follow at residues 116 to 120 (RRRRA) and 137 to 141 (RRERK). The span at 122–160 (KKAADVARRKQEEQERRERKWRQGAEKAKQHSARKEKMQ) shows a compositional bias: basic and acidic residues.

The protein belongs to the HTLV-1 HBZ protein family. As to quaternary structure, interacts with host ATF4; this interaction inhibits viral RNA transcriptional activation by preventing ATF4 binding to Tax-responsive elements. Interacts with host CREB1; this interaction inhibits host CREB1 transcriptional activity. Interacts with host JUN, JUNB and JUND. Interacts with host EP300.

Its subcellular location is the host nucleus. Its function is as follows. Contributes to the regulation of viral RNA transcription by interacting with host proteins involved in transcriptional activation such as ATF4, or CREB1, and by inhibiting their activity. Additionally, HBZ suppresses host NF-kappa-B-driven transcription mediated by host RELA as well as transcription of some classical NF-kappa-B target genes, including IL8, IL2RA, IRF4, VCAM1, and VEGFA. This chain is HTLV-1 basic zipper factor (HBZ), found in Homo sapiens (Human).